The following is a 327-amino-acid chain: uncharacterized protein (327 aa).

The disordered stretch occupies residues 12–31 (PLGTTKSYHMNTSTVSPPSP). 2 helical membrane passes run 183–203 (VSSPSVEVYIAGCCGGVPVIL) and 292–312 (VGVGIGLGMCLGVGIGVGLLM).

It localises to the membrane. This is an uncharacterized protein from Arabidopsis thaliana (Mouse-ear cress).